Consider the following 245-residue polypeptide: Uridylate kinase (245 aa).

12–15 (KLSG) lines the ATP pocket. The involved in allosteric activation by GTP stretch occupies residues 20–25 (GEKGVG). Position 54 (Gly-54) interacts with UMP. ATP contacts are provided by Gly-55 and Arg-59. Residues Asp-74 and 135 to 142 (IGSPYFST) each bind UMP. Asn-163, Tyr-169, and Asp-172 together coordinate ATP.

It belongs to the UMP kinase family. Homohexamer.

The protein resides in the cytoplasm. It carries out the reaction UMP + ATP = UDP + ADP. It functions in the pathway pyrimidine metabolism; CTP biosynthesis via de novo pathway; UDP from UMP (UMPK route): step 1/1. Allosterically activated by GTP. Inhibited by UTP. Catalyzes the reversible phosphorylation of UMP to UDP. The polypeptide is Uridylate kinase (Streptococcus thermophilus (strain ATCC BAA-250 / LMG 18311)).